Consider the following 93-residue polypeptide: Small ribosomal subunit protein uS19 (93 aa).

This sequence belongs to the universal ribosomal protein uS19 family.

Functionally, protein S19 forms a complex with S13 that binds strongly to the 16S ribosomal RNA. This Mycobacterium tuberculosis (strain ATCC 25177 / H37Ra) protein is Small ribosomal subunit protein uS19.